We begin with the raw amino-acid sequence, 509 residues long: 2,3-bisphosphoglycerate-independent phosphoglycerate mutase (509 aa).

Mn(2+) is bound by residues Asp-14 and Ser-64. Ser-64 acts as the Phosphoserine intermediate in catalysis. Residues His-125, 155 to 156 (RD), Arg-187, Arg-193, 259 to 262 (RADR), and Lys-332 each bind substrate. The Mn(2+) site is built by Asp-399, His-403, Asp-440, His-441, and His-459.

Belongs to the BPG-independent phosphoglycerate mutase family. In terms of assembly, monomer. Mn(2+) serves as cofactor.

It carries out the reaction (2R)-2-phosphoglycerate = (2R)-3-phosphoglycerate. It functions in the pathway carbohydrate degradation; glycolysis; pyruvate from D-glyceraldehyde 3-phosphate: step 3/5. In terms of biological role, catalyzes the interconversion of 2-phosphoglycerate and 3-phosphoglycerate. This Psychromonas ingrahamii (strain DSM 17664 / CCUG 51855 / 37) protein is 2,3-bisphosphoglycerate-independent phosphoglycerate mutase.